The following is an 86-amino-acid chain: Cell division topological specificity factor (86 aa).

The protein belongs to the MinE family.

Its function is as follows. Prevents the cell division inhibition by proteins MinC and MinD at internal division sites while permitting inhibition at polar sites. This ensures cell division at the proper site by restricting the formation of a division septum at the midpoint of the long axis of the cell. The chain is Cell division topological specificity factor from Polaromonas sp. (strain JS666 / ATCC BAA-500).